Consider the following 1399-residue polypeptide: DNA-directed RNA polymerase subunit beta' (1399 aa).

The Zn(2+) site is built by C70, C72, C85, and C88. Positions 460, 462, and 464 each coordinate Mg(2+). Zn(2+)-binding residues include C814, C888, C895, and C898.

The protein belongs to the RNA polymerase beta' chain family. In terms of assembly, the RNAP catalytic core consists of 2 alpha, 1 beta, 1 beta' and 1 omega subunit. When a sigma factor is associated with the core the holoenzyme is formed, which can initiate transcription. The cofactor is Mg(2+). Zn(2+) is required as a cofactor.

It catalyses the reaction RNA(n) + a ribonucleoside 5'-triphosphate = RNA(n+1) + diphosphate. In terms of biological role, DNA-dependent RNA polymerase catalyzes the transcription of DNA into RNA using the four ribonucleoside triphosphates as substrates. The sequence is that of DNA-directed RNA polymerase subunit beta' from Pseudomonas savastanoi pv. phaseolicola (strain 1448A / Race 6) (Pseudomonas syringae pv. phaseolicola (strain 1448A / Race 6)).